Reading from the N-terminus, the 396-residue chain is Elongation factor Tu (396 aa).

The tr-type G domain occupies 10-206; it reads KPHCNIGTIG…NVDEYIPQPE (197 aa). Residues 19-26 are G1; sequence GHVDHGKT. 19–26 is a GTP binding site; it reads GHVDHGKT. Threonine 26 is a binding site for Mg(2+). The tract at residues 60-64 is G2; that stretch reads GITIS. The tract at residues 81-84 is G3; the sequence is DCPG. Residues 81–85 and 136–139 contribute to the GTP site; these read DCPGH and NKCD. Positions 136 to 139 are G4; it reads NKCD. The G5 stretch occupies residues 174–176; that stretch reads SAL.

It belongs to the TRAFAC class translation factor GTPase superfamily. Classic translation factor GTPase family. EF-Tu/EF-1A subfamily. As to quaternary structure, monomer.

Its subcellular location is the cytoplasm. It catalyses the reaction GTP + H2O = GDP + phosphate + H(+). In terms of biological role, GTP hydrolase that promotes the GTP-dependent binding of aminoacyl-tRNA to the A-site of ribosomes during protein biosynthesis. In Bradyrhizobium diazoefficiens (strain JCM 10833 / BCRC 13528 / IAM 13628 / NBRC 14792 / USDA 110), this protein is Elongation factor Tu.